The primary structure comprises 867 residues: GATOR2 complex protein Mio (867 aa).

WD repeat units lie at residues 51–86 (ANES…GICN), 100–144 (RQQR…PKET), 149–188 (GVGE…ATCQ), 190–228 (IQTK…SPLR), and 231–272 (QSSK…TDNS). A compositionally biased stretch (low complexity) spans 350–376 (PASPTSTAATPTQQQPTSSCSTNSGSS). A disordered region spans residues 350 to 378 (PASPTSTAATPTQQQPTSSCSTNSGSSLD). The C4-type zinc-finger motif lies at 739-777 (LSCNFCGKSVSNALLDEPRPRSTTTSTNRLSSCPSCRKP). C741, C744, C771, C774, C784, C821, C824, H826, H829, H832, C843, C848, and C852 together coordinate Zn(2+). The RING-type; atypical zinc-finger motif lies at 778-857 (LPRCSLCLMH…CNCRCFDMDG (80 aa)).

The protein belongs to the WD repeat mio family. In terms of assembly, component of the GATOR complex consisting of mio, Nup44A/Seh1, Im11, Nplr3, Nplr2, Wdr24, Wdr59 and Sec13. Within the GATOR complex, probable component of the GATOR2 subcomplex which is likely composed of mio, Nup44A/Seh1, Wdr24, Wdr59 and Sec13. Interacts with Wdr24. Interacts with nucleoporin Nup44A/Seh1. The GATOR2 complex associates with unmet in the absence of S-adenosyl-L-methionine; the mio-Wdr24-Nup44A subcomplex is essential and sufficient for this interaction while Wdr59 and Sec13 are dispensable. This association acts as a nutrient sensor to inhibit mTORC1 signaling in the absence of methionine. Present in the oocyte.

Its subcellular location is the nucleus. The protein resides in the lysosome. Functionally, an essential component of the GATOR subcomplex GATOR2 which functions as an activator of the amino acid-sensing branch of the mTORC1 signaling pathway. The two GATOR subcomplexes, GATOR1 and GATOR2, regulate the mTORC1 pathway in order to mediate metabolic homeostasis, female gametogenesis and the response to amino acid limitation and complete starvation. GATOR2 activates the mTORC1 signaling pathway through the inhibition of the GATOR1 subcomplex, controlling the switch to cell proliferation and growth under nutrient replete conditions and during female oocyte development. This component is required for activating mTORC1 specifically in germline cells to promote cell growth and maintain the oocyte fate. GATOR1 and GATOR2 act at different stages of oogenesis to regulate mTORC1 in order to control meiotic entry and promote oocyte growth and development. After exactly four mitotic cyst divisions, the GATOR1 complex members (Iml1, Nprl2 and Nprl3) down-regulate mTORC1 to slow cellular metabolism and promote the mitotic/meiotic transition. At later stages of oogenesis, the mio and Nup44A components of the GATOR2 complex inhibit GATOR1 and thus activate mTORC1 to promote meiotic progression, and drive oocyte growth and development. In addition to its role in the regulation of the mTORC1 complex, functions independently of mTORC1 to prevent the inappropriate accumulation of autolysosomes in germline tissues. The chain is GATOR2 complex protein Mio from Drosophila melanogaster (Fruit fly).